Consider the following 163-residue polypeptide: Putative pre-16S rRNA nuclease (163 aa).

This sequence belongs to the YqgF nuclease family.

It localises to the cytoplasm. Functionally, could be a nuclease involved in processing of the 5'-end of pre-16S rRNA. The polypeptide is Putative pre-16S rRNA nuclease (Chlamydia caviae (strain ATCC VR-813 / DSM 19441 / 03DC25 / GPIC) (Chlamydophila caviae)).